Consider the following 274-residue polypeptide: Acetyl-coenzyme A carboxylase carboxyl transferase subunit beta (274 aa).

The region spanning 16–274 (LWTKCEECKN…LLNLLFYKNA (259 aa)) is the CoA carboxyltransferase N-terminal domain. Residues C20, C23, C39, and C42 each coordinate Zn(2+). The C4-type zinc-finger motif lies at 20–42 (CEECKNILLAQELETNFYVCPKC).

This sequence belongs to the AccD/PCCB family. Acetyl-CoA carboxylase is a heterohexamer composed of biotin carboxyl carrier protein (AccB), biotin carboxylase (AccC) and two subunits each of ACCase subunit alpha (AccA) and ACCase subunit beta (AccD). The cofactor is Zn(2+).

The protein resides in the cytoplasm. The catalysed reaction is N(6)-carboxybiotinyl-L-lysyl-[protein] + acetyl-CoA = N(6)-biotinyl-L-lysyl-[protein] + malonyl-CoA. It functions in the pathway lipid metabolism; malonyl-CoA biosynthesis; malonyl-CoA from acetyl-CoA: step 1/1. Its function is as follows. Component of the acetyl coenzyme A carboxylase (ACC) complex. Biotin carboxylase (BC) catalyzes the carboxylation of biotin on its carrier protein (BCCP) and then the CO(2) group is transferred by the transcarboxylase to acetyl-CoA to form malonyl-CoA. The sequence is that of Acetyl-coenzyme A carboxylase carboxyl transferase subunit beta from Hydrogenobaculum sp. (strain Y04AAS1).